We begin with the raw amino-acid sequence, 399 residues long: Succinate--CoA ligase [ADP-forming] subunit beta (399 aa).

Residues lysine 9–glutamate 254 enclose the ATP-grasp domain. Residues lysine 46, glycine 53–glycine 55, alanine 112, and glutamate 117 contribute to the ATP site. Residues asparagine 209 and aspartate 223 each coordinate Mg(2+). Substrate is bound by residues asparagine 274 and glycine 331–methionine 333.

The protein belongs to the succinate/malate CoA ligase beta subunit family. Heterotetramer of two alpha and two beta subunits. Requires Mg(2+) as cofactor.

It catalyses the reaction succinate + ATP + CoA = succinyl-CoA + ADP + phosphate. The enzyme catalyses GTP + succinate + CoA = succinyl-CoA + GDP + phosphate. The protein operates within carbohydrate metabolism; tricarboxylic acid cycle; succinate from succinyl-CoA (ligase route): step 1/1. Functionally, succinyl-CoA synthetase functions in the citric acid cycle (TCA), coupling the hydrolysis of succinyl-CoA to the synthesis of either ATP or GTP and thus represents the only step of substrate-level phosphorylation in the TCA. The beta subunit provides nucleotide specificity of the enzyme and binds the substrate succinate, while the binding sites for coenzyme A and phosphate are found in the alpha subunit. This is Succinate--CoA ligase [ADP-forming] subunit beta from Rhizorhabdus wittichii (strain DSM 6014 / CCUG 31198 / JCM 15750 / NBRC 105917 / EY 4224 / RW1) (Sphingomonas wittichii).